The following is a 282-amino-acid chain: D-alanine aminotransferase (282 aa).

Position 32 (Y32) interacts with substrate. Position 51 (R51) interacts with pyridoxal 5'-phosphate. Substrate contacts are provided by R99 and H101. Catalysis depends on K146, which acts as the Proton acceptor. K146 carries the N6-(pyridoxal phosphate)lysine modification. E178 lines the pyridoxal 5'-phosphate pocket.

Belongs to the class-IV pyridoxal-phosphate-dependent aminotransferase family. In terms of assembly, homodimer. The cofactor is pyridoxal 5'-phosphate.

It carries out the reaction D-alanine + 2-oxoglutarate = D-glutamate + pyruvate. Functionally, acts on the D-isomers of alanine, leucine, aspartate, glutamate, aminobutyrate, norvaline and asparagine. The enzyme transfers an amino group from a substrate D-amino acid to the pyridoxal phosphate cofactor to form pyridoxamine and an alpha-keto acid in the first half-reaction. The second half-reaction is the reverse of the first, transferring the amino group from the pyridoxamine to a second alpha-keto acid to form the product D-amino acid via a ping-pong mechanism. This is an important process in the formation of D-alanine and D-glutamate, which are essential bacterial cell wall components. The chain is D-alanine aminotransferase (dat) from Staphylococcus aureus (strain N315).